We begin with the raw amino-acid sequence, 437 residues long: Adenosylhomocysteinase (437 aa).

Threonine 58, aspartate 133, and glutamate 158 together coordinate substrate. Threonine 159 to threonine 161 is an NAD(+) binding site. Substrate-binding residues include lysine 188 and aspartate 192. Residues asparagine 193, glycine 224–glycine 229, glutamate 245, valine 301–histidine 303, and asparagine 348 contribute to the NAD(+) site.

The protein belongs to the adenosylhomocysteinase family. In terms of assembly, homotetramer. The cofactor is NAD(+).

The catalysed reaction is S-adenosyl-L-homocysteine + H2O = L-homocysteine + adenosine. Its pathway is amino-acid biosynthesis; L-homocysteine biosynthesis; L-homocysteine from S-adenosyl-L-homocysteine: step 1/1. In terms of biological role, adenosylhomocysteine is a competitive inhibitor of S-adenosyl-L-methionine-dependent methyl transferase reactions; therefore adenosylhomocysteinase may play a key role in the control of methylations via regulation of the intracellular concentration of adenosylhomocysteine. In Caenorhabditis elegans, this protein is Adenosylhomocysteinase (ahcy-1).